The primary structure comprises 689 residues: Glycine--tRNA ligase beta subunit (689 aa).

This sequence belongs to the class-II aminoacyl-tRNA synthetase family. As to quaternary structure, tetramer of two alpha and two beta subunits.

It is found in the cytoplasm. It catalyses the reaction tRNA(Gly) + glycine + ATP = glycyl-tRNA(Gly) + AMP + diphosphate. This Lacticaseibacillus paracasei (strain ATCC 334 / BCRC 17002 / CCUG 31169 / CIP 107868 / KCTC 3260 / NRRL B-441) (Lactobacillus paracasei) protein is Glycine--tRNA ligase beta subunit.